Consider the following 525-residue polypeptide: Putative ribose/galactose/methyl galactoside import ATP-binding protein (525 aa).

The segment covering 1–15 has biased composition (polar residues); sequence MFGSATANPPAQRNL. A disordered region spans residues 1-23; it reads MFGSATANPPAQRNLPSGDGDGG. 2 ABC transporter domains span residues 33–269 and 279–523; these read LEIS…VGRE and KPAG…SGHK. Residue 65 to 72 coordinates ATP; the sequence is GENGAGKS.

This sequence belongs to the ABC transporter superfamily. Carbohydrate importer 2 (CUT2) (TC 3.A.1.2) family.

It is found in the cell inner membrane. It carries out the reaction D-ribose(out) + ATP + H2O = D-ribose(in) + ADP + phosphate + H(+). The catalysed reaction is D-galactose(out) + ATP + H2O = D-galactose(in) + ADP + phosphate + H(+). Its function is as follows. Part of an ABC transporter complex involved in carbohydrate import. Could be involved in ribose, galactose and/or methyl galactoside import. Responsible for energy coupling to the transport system. The chain is Putative ribose/galactose/methyl galactoside import ATP-binding protein from Pseudomonas syringae pv. syringae (strain B728a).